A 241-amino-acid chain; its full sequence is Phosphoadenosine 5'-phosphosulfate reductase (241 aa).

The Nucleophile; cysteine thiosulfonate intermediate role is filled by Cys235.

This sequence belongs to the PAPS reductase family. CysH subfamily.

The protein localises to the cytoplasm. The catalysed reaction is [thioredoxin]-disulfide + sulfite + adenosine 3',5'-bisphosphate + 2 H(+) = [thioredoxin]-dithiol + 3'-phosphoadenylyl sulfate. It functions in the pathway sulfur metabolism; hydrogen sulfide biosynthesis; sulfite from sulfate: step 3/3. Its function is as follows. Catalyzes the formation of sulfite from phosphoadenosine 5'-phosphosulfate (PAPS) using thioredoxin as an electron donor. The chain is Phosphoadenosine 5'-phosphosulfate reductase from Xanthomonas campestris pv. campestris (strain 8004).